Reading from the N-terminus, the 146-residue chain is UPF0260 protein Ssed_2516 (146 aa).

The protein belongs to the UPF0260 family.

The sequence is that of UPF0260 protein Ssed_2516 from Shewanella sediminis (strain HAW-EB3).